The primary structure comprises 289 residues: Diaminopimelate epimerase (289 aa).

Asparagine 11 and asparagine 78 together coordinate substrate. Catalysis depends on cysteine 87, which acts as the Proton donor. Residues 88 to 89, asparagine 163, asparagine 199, and 217 to 218 contribute to the substrate site; these read GN and ER. Catalysis depends on cysteine 226, which acts as the Proton acceptor. 227–228 provides a ligand contact to substrate; it reads GT.

It belongs to the diaminopimelate epimerase family. As to quaternary structure, homodimer.

The protein localises to the cytoplasm. It carries out the reaction (2S,6S)-2,6-diaminopimelate = meso-2,6-diaminopimelate. It participates in amino-acid biosynthesis; L-lysine biosynthesis via DAP pathway; DL-2,6-diaminopimelate from LL-2,6-diaminopimelate: step 1/1. In terms of biological role, catalyzes the stereoinversion of LL-2,6-diaminopimelate (L,L-DAP) to meso-diaminopimelate (meso-DAP), a precursor of L-lysine and an essential component of the bacterial peptidoglycan. The protein is Diaminopimelate epimerase of Rhodococcus jostii (strain RHA1).